Reading from the N-terminus, the 430-residue chain is Dihydroorotase (430 aa).

Residues His57 and His59 each coordinate Zn(2+). Residues 59–61 and Asn91 each bind substrate; that span reads HLR. Zn(2+) is bound by residues Asp151, His178, and His231. Residue Asn277 participates in substrate binding. Asp304 provides a ligand contact to Zn(2+). Asp304 is a catalytic residue. Substrate-binding positions include His308 and 322-323; that span reads PG.

Belongs to the metallo-dependent hydrolases superfamily. DHOase family. Class I DHOase subfamily. It depends on Zn(2+) as a cofactor.

It catalyses the reaction (S)-dihydroorotate + H2O = N-carbamoyl-L-aspartate + H(+). It functions in the pathway pyrimidine metabolism; UMP biosynthesis via de novo pathway; (S)-dihydroorotate from bicarbonate: step 3/3. Its function is as follows. Catalyzes the reversible cyclization of carbamoyl aspartate to dihydroorotate. This chain is Dihydroorotase, found in Mycobacterium tuberculosis (strain ATCC 25618 / H37Rv).